We begin with the raw amino-acid sequence, 72 residues long: MNNKEFNMEQFKKLAAVVSEDELDEMLDENVTGAASSIPCAKVVVKVTTVVVAATTGFDWCPTGACTTSCRF.

A propeptide spans 1–34 (cleaved by FlvT); the sequence is MNNKEFNMEQFKKLAAVVSEDELDEMLDENVTGA. Residues 36–40 constitute a cross-link (lanthionine (Ser-Cys); by FlvM2); that stretch reads SSIPC. Serine 37 carries the post-translational modification 2,3-didehydroalanine (Ser); by FlvM2. A 2,3-didehydrobutyrine; by FlvM2 mark is found at threonine 48 and threonine 49. Cross-links (beta-methyllanthionine (Thr-Cys); by FlvM2) lie at residues 55–61, 63–66, and 67–70; these read TTGFDWC, TGAC, and TTSC.

In terms of processing, contains LL-lanthionine and DL-beta-methyllanthionine, when coepressed in E.coli with the flavecin synthetase FlvM2.

The protein resides in the secreted. Lanthionine-containing peptide antibiotic (lantibiotic) that is probably active on Gram-positive bacteria, since its analog [Del1]Flvbeta.e shows antibacterial activity against Gram-positive bacteria. This activity is not synergistically enhanced by [Del2]Flvalpha.a, an analog of Flvalpha.a, which is encoded by the same operon than Flvbeta.e. The bactericidal activity of lantibiotics is based on depolarization of energized bacterial cytoplasmic membranes, initiated by the formation of aqueous transmembrane pores. This Ruminococcus flavefaciens protein is Lantibiotic Flvbeta.e.